The sequence spans 347 residues: 3-isopropylmalate dehydrogenase (347 aa).

Residue 76–87 participates in NAD(+) binding; the sequence is GPKWTDPNNRPE. Arginine 94, arginine 104, arginine 132, and aspartate 217 together coordinate substrate. Residues aspartate 217, aspartate 241, and aspartate 245 each coordinate Mg(2+). Residue 275–287 coordinates NAD(+); the sequence is GSAPDIANEDKAN.

Belongs to the isocitrate and isopropylmalate dehydrogenases family. LeuB type 1 subfamily. Homodimer. It depends on Mg(2+) as a cofactor. The cofactor is Mn(2+).

The protein resides in the cytoplasm. It carries out the reaction (2R,3S)-3-isopropylmalate + NAD(+) = 4-methyl-2-oxopentanoate + CO2 + NADH. The protein operates within amino-acid biosynthesis; L-leucine biosynthesis; L-leucine from 3-methyl-2-oxobutanoate: step 3/4. Its function is as follows. Catalyzes the oxidation of 3-carboxy-2-hydroxy-4-methylpentanoate (3-isopropylmalate) to 3-carboxy-4-methyl-2-oxopentanoate. The product decarboxylates to 4-methyl-2 oxopentanoate. The sequence is that of 3-isopropylmalate dehydrogenase from Staphylococcus epidermidis (strain ATCC 12228 / FDA PCI 1200).